The chain runs to 112 residues: Larval cuticle protein III/IV (112 aa).

A signal peptide spans 1 to 16 (MFKILLVCALAALVAA). A Chitin-binding type R&amp;R domain is found at 31–92 (PDGFKTVVSL…PSSDLLPVAP (62 aa)).

In terms of biological role, component of the larval cuticle. The sequence is that of Larval cuticle protein III/IV (Lcp3) from Drosophila miranda (Fruit fly).